A 573-amino-acid chain; its full sequence is Proline--tRNA ligase (573 aa).

Belongs to the class-II aminoacyl-tRNA synthetase family. ProS type 1 subfamily. Homodimer.

Its subcellular location is the cytoplasm. It carries out the reaction tRNA(Pro) + L-proline + ATP = L-prolyl-tRNA(Pro) + AMP + diphosphate. Functionally, catalyzes the attachment of proline to tRNA(Pro) in a two-step reaction: proline is first activated by ATP to form Pro-AMP and then transferred to the acceptor end of tRNA(Pro). As ProRS can inadvertently accommodate and process non-cognate amino acids such as alanine and cysteine, to avoid such errors it has two additional distinct editing activities against alanine. One activity is designated as 'pretransfer' editing and involves the tRNA(Pro)-independent hydrolysis of activated Ala-AMP. The other activity is designated 'posttransfer' editing and involves deacylation of mischarged Ala-tRNA(Pro). The misacylated Cys-tRNA(Pro) is not edited by ProRS. In Geobacter sp. (strain M21), this protein is Proline--tRNA ligase.